The primary structure comprises 452 residues: Probable dihydrolipoyllysine-residue succinyltransferase component of 2-oxoglutarate dehydrogenase complex, mitochondrial (452 aa).

A Lipoyl-binding domain is found at 42 to 117 (STRIKTPPFP…TIDQDIAVID (76 aa)). Lys83 bears the N6-lipoyllysine mark. The interval 119-225 (SAAPPEGGSA…FSRNEDRVKM (107 aa)) is disordered. Basic and acidic residues-rich tracts occupy residues 130–144 (PKKD…DAAK), 154–170 (KPIE…EQKE), and 195–209 (AKSE…KATE). Catalysis depends on residues His424 and Asp428.

It belongs to the 2-oxoacid dehydrogenase family. (R)-lipoate is required as a cofactor.

The protein resides in the mitochondrion. It carries out the reaction N(6)-[(R)-dihydrolipoyl]-L-lysyl-[protein] + succinyl-CoA = N(6)-[(R)-S(8)-succinyldihydrolipoyl]-L-lysyl-[protein] + CoA. It functions in the pathway amino-acid degradation; L-lysine degradation via saccharopine pathway; glutaryl-CoA from L-lysine: step 6/6. Functionally, the 2-oxoglutarate dehydrogenase complex catalyzes the overall conversion of 2-oxoglutarate to succinyl-CoA and CO(2). It contains multiple copies of three enzymatic components: 2-oxoglutarate dehydrogenase (E1), dihydrolipoamide succinyltransferase (E2) and lipoamide dehydrogenase (E3). This chain is Probable dihydrolipoyllysine-residue succinyltransferase component of 2-oxoglutarate dehydrogenase complex, mitochondrial (kgd2), found in Schizosaccharomyces pombe (strain 972 / ATCC 24843) (Fission yeast).